We begin with the raw amino-acid sequence, 195 residues long: CD70 antigen (195 aa).

Topologically, residues 1 to 23 (MPEEGRPCPWVRWSGTAFQRQWP) are cytoplasmic. The helical; Signal-anchor for type II membrane protein transmembrane segment at 24–44 (WLLLVVFITVFCCWFHCSGLL) threads the bilayer. Residues 45–195 (SKQQQRLLEH…TFFGVQWICP (151 aa)) are Extracellular-facing. One can recognise a THD domain in the interval 58-193 (HTAELQLNLT…DETFFGVQWI (136 aa)). Asparagine 65 and asparagine 116 each carry an N-linked (GlcNAc...) asparagine glycan. 2 cysteine pairs are disulfide-bonded: cysteine 117/cysteine 153 and cysteine 135/cysteine 170. The N-linked (GlcNAc...) asparagine glycan is linked to asparagine 172.

This sequence belongs to the tumor necrosis factor family. As to quaternary structure, homotrimer. N-glycosylated. Very low level of expression. Detected in splenocytes and thymocytes.

Its subcellular location is the cell membrane. Functionally, expressed at the plasma membrane of B cells, it is the ligand of the CD27 receptor which is specifically expressed at the surface of T cells. The CD70-CD27 signaling pathway mediates antigen-specific T cell activation and expansion which in turn provides immune surveillance of B cells. This is CD70 antigen from Mus musculus (Mouse).